A 400-amino-acid chain; its full sequence is MGLFKVIFTAVAALSAVDAAELLSSAKSKDIIPNSYLVVMKDSVSSAELDSHVSWVTDLHREGVAKRGAENLGGFKHSYKINGWHAYSGSFDSETLASILDNDKVDFVEHDRHVYISGFVTQKDAPSWGLGRVSHRMNGTRDYVYDESAGSGITFYGVDTGIDIHHPDFGGRAVWGINVVNDTKDNDRHGHGTHTAATAAGTKYGLAKKANVVAVKALNDYGAGLWSNIMKALEWCVNDAREKKILGKAVLNLSISGGKVVAANQAITNAAKAGIFVSVAAGNDNQDATNKSPASAENVCCAAATTIRDDKAKFSNYGSVVKLYAPGQGITSATPNNQTGVMSGTSMAAPHVGGVGATLMASKGIAPAAVCAELIKMASGPVLNPGANTTNKLLYNRSGK.

An N-terminal signal peptide occupies residues 1 to 19 (MGLFKVIFTAVAALSAVDA). A propeptide spanning residues 20–117 (AELLSSAKSK…VEHDRHVYIS (98 aa)) is cleaved from the precursor. The Inhibitor I9 domain occupies 35–116 (SYLVVMKDSV…FVEHDRHVYI (82 aa)). In terms of domain architecture, Peptidase S8 spans 127–400 (SWGLGRVSHR…NKLLYNRSGK (274 aa)). Asparagine 138 is a glycosylation site (N-linked (GlcNAc...) asparagine). Aspartate 159 acts as the Charge relay system in catalysis. N-linked (GlcNAc...) asparagine glycosylation occurs at asparagine 181. The Charge relay system role is filled by histidine 191. N-linked (GlcNAc...) asparagine glycosylation is found at asparagine 252 and asparagine 337. The Charge relay system role is filled by serine 346. N-linked (GlcNAc...) asparagine glycans are attached at residues asparagine 388 and asparagine 396.

The protein belongs to the peptidase S8 family.

The protein resides in the secreted. Its function is as follows. Secreted subtilisin-like serine protease with keratinolytic activity that contributes to pathogenicity. This is Subtilisin-like protease 11 (SUB11) from Trichophyton verrucosum (strain HKI 0517).